The following is a 366-amino-acid chain: Peptide chain release factor 2 (366 aa).

Gln251 carries the N5-methylglutamine modification.

This sequence belongs to the prokaryotic/mitochondrial release factor family. In terms of processing, methylated by PrmC. Methylation increases the termination efficiency of RF2.

It localises to the cytoplasm. Peptide chain release factor 2 directs the termination of translation in response to the peptide chain termination codons UGA and UAA. The chain is Peptide chain release factor 2 from Campylobacter lari (strain RM2100 / D67 / ATCC BAA-1060).